Reading from the N-terminus, the 319-residue chain is Acetyl-coenzyme A carboxylase carboxyl transferase subunit alpha (319 aa).

In terms of domain architecture, CoA carboxyltransferase C-terminal spans 38–293; sequence HALQDKLRMR…KAVLLNELDA (256 aa).

The protein belongs to the AccA family. As to quaternary structure, acetyl-CoA carboxylase is a heterohexamer composed of biotin carboxyl carrier protein (AccB), biotin carboxylase (AccC) and two subunits each of ACCase subunit alpha (AccA) and ACCase subunit beta (AccD).

It is found in the cytoplasm. It carries out the reaction N(6)-carboxybiotinyl-L-lysyl-[protein] + acetyl-CoA = N(6)-biotinyl-L-lysyl-[protein] + malonyl-CoA. It functions in the pathway lipid metabolism; malonyl-CoA biosynthesis; malonyl-CoA from acetyl-CoA: step 1/1. Functionally, component of the acetyl coenzyme A carboxylase (ACC) complex. First, biotin carboxylase catalyzes the carboxylation of biotin on its carrier protein (BCCP) and then the CO(2) group is transferred by the carboxyltransferase to acetyl-CoA to form malonyl-CoA. This Stenotrophomonas maltophilia (strain K279a) protein is Acetyl-coenzyme A carboxylase carboxyl transferase subunit alpha.